The following is an 84-amino-acid chain: Large ribosomal subunit protein eL34 (84 aa).

Belongs to the eukaryotic ribosomal protein eL34 family.

The polypeptide is Large ribosomal subunit protein eL34 (ribL34e) (Pyrobaculum aerophilum (strain ATCC 51768 / DSM 7523 / JCM 9630 / CIP 104966 / NBRC 100827 / IM2)).